We begin with the raw amino-acid sequence, 165 residues long: GTPase activating protein 1 (165 aa).

The 105-residue stretch at methionine 1–alanine 105 folds into the C2 domain. Ca(2+) contacts are provided by arginine 22, aspartate 23, aspartate 28, aspartate 74, lysine 75, aspartate 76, and aspartate 81.

It belongs to the plant CAR protein family. In terms of assembly, binds to PYR/PYL/RCAR abscisic acid intracellular receptors in an ABA-independent manner, both at the plasma membrane and in the nucleus. Binds phospholipids in a Ca(2+)-dependent manner. Interacts with YchF1.

It localises to the cell membrane. It is found in the nucleus. The protein localises to the cytoplasm. The protein resides in the cytosol. In terms of biological role, mediates the transient calcium-dependent interaction of PYR/PYL/RCAR abscisic acid (ABA) receptors with the plasma membrane and thus regulates ABA sensitivity. Stimulates the GTPase/ATPase activities of YchF1, and regulates its subcellular localization. Promotes tolerance towards salinity stress by limiting the accumulation of reactive oxygen species (ROS). Promotes resistance to bacterial pathogens. The protein is GTPase activating protein 1 of Oryza sativa subsp. indica (Rice).